Reading from the N-terminus, the 241-residue chain is Small ribosomal subunit protein uS2 (241 aa).

It belongs to the universal ribosomal protein uS2 family.

This is Small ribosomal subunit protein uS2 from Glaesserella parasuis serovar 5 (strain SH0165) (Haemophilus parasuis).